Here is a 34-residue protein sequence, read N- to C-terminus: Photosystem II reaction center protein Psb30 (34 aa).

A helical transmembrane segment spans residues 6 to 26 (VIGQLVSTGLIGLLGPAVIIL).

The protein belongs to the Psb30/Ycf12 family. PSII is composed of 1 copy each of membrane proteins PsbA, PsbB, PsbC, PsbD, PsbE, PsbF, PsbH, PsbI, PsbJ, PsbK, PsbL, PsbM, PsbT, PsbX, PsbY, PsbZ, Psb30/Ycf12, peripheral proteins of the oxygen-evolving complex and a large number of cofactors. It forms dimeric complexes.

The protein localises to the plastid. It localises to the chloroplast thylakoid membrane. In terms of biological role, a core subunit of photosystem II (PSII), probably helps stabilize the reaction center. This is Photosystem II reaction center protein Psb30 from Skeletonema costatum (Marine centric diatom).